The sequence spans 469 residues: 3-isopropylmalate dehydratase large subunit (469 aa).

[4Fe-4S] cluster-binding residues include C347, C408, and C411.

This sequence belongs to the aconitase/IPM isomerase family. LeuC type 1 subfamily. Heterodimer of LeuC and LeuD. [4Fe-4S] cluster is required as a cofactor.

It catalyses the reaction (2R,3S)-3-isopropylmalate = (2S)-2-isopropylmalate. Its pathway is amino-acid biosynthesis; L-leucine biosynthesis; L-leucine from 3-methyl-2-oxobutanoate: step 2/4. Catalyzes the isomerization between 2-isopropylmalate and 3-isopropylmalate, via the formation of 2-isopropylmaleate. This Actinobacillus pleuropneumoniae serotype 7 (strain AP76) protein is 3-isopropylmalate dehydratase large subunit.